Consider the following 271-residue polypeptide: Acyl-[acyl-carrier-protein]--UDP-N-acetylglucosamine O-acyltransferase (271 aa).

This sequence belongs to the transferase hexapeptide repeat family. LpxA subfamily. In terms of assembly, homotrimer.

Its subcellular location is the cytoplasm. The enzyme catalyses a (3R)-hydroxyacyl-[ACP] + UDP-N-acetyl-alpha-D-glucosamine = a UDP-3-O-[(3R)-3-hydroxyacyl]-N-acetyl-alpha-D-glucosamine + holo-[ACP]. The protein operates within glycolipid biosynthesis; lipid IV(A) biosynthesis; lipid IV(A) from (3R)-3-hydroxytetradecanoyl-[acyl-carrier-protein] and UDP-N-acetyl-alpha-D-glucosamine: step 1/6. Its function is as follows. Involved in the biosynthesis of lipid A, a phosphorylated glycolipid that anchors the lipopolysaccharide to the outer membrane of the cell. The polypeptide is Acyl-[acyl-carrier-protein]--UDP-N-acetylglucosamine O-acyltransferase (Sulfurihydrogenibium sp. (strain YO3AOP1)).